The chain runs to 232 residues: 2-C-methyl-D-erythritol 4-phosphate cytidylyltransferase (232 aa).

The protein belongs to the IspD/TarI cytidylyltransferase family. IspD subfamily.

The catalysed reaction is 2-C-methyl-D-erythritol 4-phosphate + CTP + H(+) = 4-CDP-2-C-methyl-D-erythritol + diphosphate. Its pathway is isoprenoid biosynthesis; isopentenyl diphosphate biosynthesis via DXP pathway; isopentenyl diphosphate from 1-deoxy-D-xylulose 5-phosphate: step 2/6. Catalyzes the formation of 4-diphosphocytidyl-2-C-methyl-D-erythritol from CTP and 2-C-methyl-D-erythritol 4-phosphate (MEP). The protein is 2-C-methyl-D-erythritol 4-phosphate cytidylyltransferase of Neorickettsia sennetsu (strain ATCC VR-367 / Miyayama) (Ehrlichia sennetsu).